Consider the following 145-residue polypeptide: Basic phospholipase A2 beta-bungarotoxin A2 chain (145 aa).

The first 17 residues, 1-17 (MLIFLWCGAVCVSLLGA), serve as a signal peptide directing secretion. The propeptide occupies 18 to 25 (ANIPPHPL). 6 cysteine pairs are disulfide-bonded: C52/C144, C54/C70, C69/C125, C76/C118, C86/C111, and C104/C116. Residues Y53, G55, and G57 each contribute to the Ca(2+) site. H73 is an active-site residue. Residue D74 coordinates Ca(2+). Residue D119 is part of the active site.

The protein belongs to the phospholipase A2 family. Group I subfamily. D49 sub-subfamily. Heterodimer; disulfide-linked. The A chains have phospholipase A2 activity and the B chains show homology with the basic protease inhibitors. The A2 chain is found in beta-3 and beta-4 bungarotoxins. The cofactor is Ca(2+). As to expression, expressed by the venom gland.

Its subcellular location is the secreted. The enzyme catalyses a 1,2-diacyl-sn-glycero-3-phosphocholine + H2O = a 1-acyl-sn-glycero-3-phosphocholine + a fatty acid + H(+). Its function is as follows. Snake venom phospholipase A2 (PLA2) that inhibits neuromuscular transmission by blocking acetylcholine release from the nerve termini. PLA2 catalyzes the calcium-dependent hydrolysis of the 2-acyl groups in 3-sn-phosphoglycerides. The sequence is that of Basic phospholipase A2 beta-bungarotoxin A2 chain from Bungarus multicinctus (Many-banded krait).